A 419-amino-acid chain; its full sequence is UDP-N-acetylglucosamine 1-carboxyvinyltransferase (419 aa).

22–23 (KN) provides a ligand contact to phosphoenolpyruvate. Position 93 (Arg93) interacts with UDP-N-acetyl-alpha-D-glucosamine. Residue Cys117 is the Proton donor of the active site. Cys117 is modified (2-(S-cysteinyl)pyruvic acid O-phosphothioketal). UDP-N-acetyl-alpha-D-glucosamine-binding residues include Asp307 and Ile329.

This sequence belongs to the EPSP synthase family. MurA subfamily.

Its subcellular location is the cytoplasm. It carries out the reaction phosphoenolpyruvate + UDP-N-acetyl-alpha-D-glucosamine = UDP-N-acetyl-3-O-(1-carboxyvinyl)-alpha-D-glucosamine + phosphate. Its pathway is cell wall biogenesis; peptidoglycan biosynthesis. Cell wall formation. Adds enolpyruvyl to UDP-N-acetylglucosamine. This is UDP-N-acetylglucosamine 1-carboxyvinyltransferase from Shewanella sediminis (strain HAW-EB3).